The sequence spans 464 residues: ATP synthase subunit beta (464 aa).

153 to 160 (GGAGVGKT) lines the ATP pocket.

Belongs to the ATPase alpha/beta chains family. In terms of assembly, F-type ATPases have 2 components, CF(1) - the catalytic core - and CF(0) - the membrane proton channel. CF(1) has five subunits: alpha(3), beta(3), gamma(1), delta(1), epsilon(1). CF(0) has three main subunits: a(1), b(2) and c(9-12). The alpha and beta chains form an alternating ring which encloses part of the gamma chain. CF(1) is attached to CF(0) by a central stalk formed by the gamma and epsilon chains, while a peripheral stalk is formed by the delta and b chains.

The protein resides in the cell inner membrane. The enzyme catalyses ATP + H2O + 4 H(+)(in) = ADP + phosphate + 5 H(+)(out). Its function is as follows. Produces ATP from ADP in the presence of a proton gradient across the membrane. The catalytic sites are hosted primarily by the beta subunits. The protein is ATP synthase subunit beta of Burkholderia cenocepacia (strain ATCC BAA-245 / DSM 16553 / LMG 16656 / NCTC 13227 / J2315 / CF5610) (Burkholderia cepacia (strain J2315)).